We begin with the raw amino-acid sequence, 365 residues long: ATP-dependent (S)-NAD(P)H-hydrate dehydratase (365 aa).

The transit peptide at M1–R43 directs the protein to the chloroplast. N-acetylserine is present on L2. The YjeF C-terminal domain occupies A53–I361. Residues G169 and N222–R228 each bind (6S)-NADPHX. Residues K262–D266 and G281–G290 each bind ATP. D291 is a (6S)-NADPHX binding site.

Belongs to the NnrD/CARKD family. Mg(2+) is required as a cofactor.

It is found in the plastid. The protein localises to the chloroplast. The protein resides in the cytoplasm. It carries out the reaction (6S)-NADHX + ATP = ADP + phosphate + NADH + H(+). The catalysed reaction is (6S)-NADPHX + ATP = ADP + phosphate + NADPH + H(+). Its function is as follows. Catalyzes the dehydration of the S-form of NAD(P)HX at the expense of ATP, which is converted to ADP. Together with NAD(P)HX epimerase, which catalyzes the epimerization of the S- and R-forms, the enzyme allows the repair of both epimers of NAD(P)HX, a damaged form of NAD(P)H that is a result of enzymatic or heat-dependent hydration. The polypeptide is ATP-dependent (S)-NAD(P)H-hydrate dehydratase (Arabidopsis thaliana (Mouse-ear cress)).